The primary structure comprises 751 residues: Diamine oxidase [copper-containing] (751 aa).

The signal sequence occupies residues 1-19 (MPALGWAVAAILMLQTAMA). Residues asparagine 110 and asparagine 168 are each glycosylated (N-linked (GlcNAc...) asparagine). A disulfide bridge connects residues cysteine 177 and cysteine 181. Catalysis depends on aspartate 373, which acts as the Proton acceptor. The cysteines at positions 391 and 417 are disulfide-linked. Catalysis depends on tyrosine 461, which acts as the Schiff-base intermediate with substrate; via topaquinone. Tyrosine 461 is modified (2',4',5'-topaquinone). Residues histidine 510 and histidine 512 each coordinate Cu(2+). Positions 519, 520, and 521 each coordinate Ca(2+). Asparagine 538 carries N-linked (GlcNAc...) asparagine glycosylation. The Ca(2+) site is built by glutamate 562, phenylalanine 653, asparagine 656, glutamate 658, aspartate 664, and leucine 665. Residue histidine 675 coordinates Cu(2+). An N-linked (GlcNAc...) asparagine glycan is attached at asparagine 745.

This sequence belongs to the copper/topaquinone oxidase family. In terms of assembly, homodimer; disulfide-linked. The cofactor is Cu(2+). It depends on Ca(2+) as a cofactor. L-topaquinone serves as cofactor. N-glycosylated. In terms of processing, topaquinone (TPQ) is generated by copper-dependent autoxidation of a specific tyrosyl residue. In terms of tissue distribution, widely expressed with higher expression in placenta and kidney.

It is found in the secreted. It localises to the extracellular space. Its subcellular location is the cell membrane. It carries out the reaction histamine + O2 + H2O = imidazole-4-acetaldehyde + H2O2 + NH4(+). The enzyme catalyses N(tau)-methylhistamine + O2 + H2O = 1-methylimidazole-4-acetaldehyde + H2O2 + NH4(+). It catalyses the reaction putrescine + O2 + H2O = 4-aminobutanal + H2O2 + NH4(+). The catalysed reaction is cadaverine + O2 + H2O = 5-aminopentanal + H2O2 + NH4(+). Its activity is regulated as follows. Inhibited by amiloride and amiloride analogs. Inhibited by isoniazid, cimetidine, clonidine, berenil and pentamidine. Functionally, catalyzes the oxidative deamination of primary amines to the corresponding aldehydes with the concomitant production of hydrogen peroxide and ammonia. Its preferred substrates are the diamines histamine and 1-methylhistamine and it could therefore play a role in allergic and immune responses. Has a broad specificity for diamines and can also act on cadaverine and putrescine, two products of amino acid catabolism. It could also act on polyamines, like spermidine and spermine though less efficiently, and regulate various biological processes. This Homo sapiens (Human) protein is Diamine oxidase [copper-containing].